A 560-amino-acid polypeptide reads, in one-letter code: Potassium-transporting ATPase potassium-binding subunit (560 aa).

12 helical membrane-spanning segments follow: residues 11 to 31 (IFLL…VAFF), 63 to 83 (SYCT…YGLL), 134 to 154 (FVTM…TALI), 179 to 199 (LLPL…PQTF), 254 to 274 (VIEM…YGHA), 282 to 302 (WVLF…VYNA), 329 to 349 (FGIP…TGSV), 356 to 376 (LTPI…VFGG), 379 to 399 (VGFV…GLMV), 417 to 437 (LIVI…AIAL), 488 to 508 (VVML…AGSL), and 530 to 550 (VILF…VLIL).

It belongs to the KdpA family. As to quaternary structure, the system is composed of three essential subunits: KdpA, KdpB and KdpC.

It is found in the cell membrane. Functionally, part of the high-affinity ATP-driven potassium transport (or Kdp) system, which catalyzes the hydrolysis of ATP coupled with the electrogenic transport of potassium into the cytoplasm. This subunit binds the extracellular potassium ions and delivers the ions to the membrane domain of KdpB through an intramembrane tunnel. This chain is Potassium-transporting ATPase potassium-binding subunit, found in Geobacillus kaustophilus (strain HTA426).